Here is a 135-residue protein sequence, read N- to C-terminus: Protein E6 (135 aa).

Zinc fingers lie at residues 11-47 (CVFC…CTAC) and 83-119 (CMYC…CYTC).

Belongs to the papillomaviridae E6 protein family. Forms homodimers. Interacts with ubiquitin-protein ligase UBE3A/E6-AP; this interaction stimulates UBE3A ubiquitin activity. Interacts with host BAK1.

It is found in the host cytoplasm. The protein localises to the host nucleus. Plays a major role in the induction and maintenance of cellular transformation. E6 associates with host UBE3A/E6-AP ubiquitin-protein ligase and modulates its activity. Protects host keratinocytes from apoptosis by mediating the degradation of host BAK1. May also inhibit host immune response. The polypeptide is Protein E6 (Odocoileus virginianus papillomavirus 1 (DPV)).